A 777-amino-acid chain; its full sequence is E3 UFM1-protein ligase 1 homolog (777 aa).

Residues 396–417 are compositionally biased toward basic and acidic residues; the sequence is MKHQDPMDRDSAVGEGKADKRE. Residues 396 to 470 form a disordered region; the sequence is MKHQDPMDRD…PSGGKKGGKD (75 aa).

Belongs to the UFL1 family.

Functionally, E3 UFM1-protein ligase that mediates ufmylation of target proteins. In Aedes aegypti (Yellowfever mosquito), this protein is E3 UFM1-protein ligase 1 homolog.